We begin with the raw amino-acid sequence, 451 residues long: Methylenetetrahydrofolate--tRNA-(uracil-5-)-methyltransferase TrmFO (451 aa).

9-14 lines the FAD pocket; it reads GGGMAG.

This sequence belongs to the MnmG family. TrmFO subfamily. It depends on FAD as a cofactor.

The protein localises to the cytoplasm. It catalyses the reaction uridine(54) in tRNA + (6R)-5,10-methylene-5,6,7,8-tetrahydrofolate + NADH + H(+) = 5-methyluridine(54) in tRNA + (6S)-5,6,7,8-tetrahydrofolate + NAD(+). The catalysed reaction is uridine(54) in tRNA + (6R)-5,10-methylene-5,6,7,8-tetrahydrofolate + NADPH + H(+) = 5-methyluridine(54) in tRNA + (6S)-5,6,7,8-tetrahydrofolate + NADP(+). Its function is as follows. Catalyzes the folate-dependent formation of 5-methyl-uridine at position 54 (M-5-U54) in all tRNAs. This is Methylenetetrahydrofolate--tRNA-(uracil-5-)-methyltransferase TrmFO from Dinoroseobacter shibae (strain DSM 16493 / NCIMB 14021 / DFL 12).